The sequence spans 418 residues: MDKLVVNGGNPLFGSVEIGGAKNAAVAILPAAIMASEGISVIDNIPDIQDIQRLERIITSLGCKVKRVQNTVEIDSTNLTSVNADTEDGSKMRASYYLIGALLGRFGKAKVELPGGCPIGVRPIDQHIKGFEALGATVKISHGTVEAQADKLIGTNIYFDVVSVGATINLMLASVFAEGTTVLENAAKEPHIVDVANFLNSMGANIKGAGTDVIRIAGVEKLKGCNYSVIPDQIEAATYMIATAACGGCVTIKNVIPKHLESISAKLIEMGADIKEGDDYVTIESHKNLKGVNIKTLPYPGFPTDAQQPMSTLLSISQGRSIVNESIWESRLKHVDELKKMGANIKVEGTVAIIDGVEKLTGANVKATDLRAGAAMVIAALAAEGVSEISCIEHIDRGYPHIEDKFKELGANIRREKI.

22 to 23 serves as a coordination point for phosphoenolpyruvate; it reads KN. Arg93 is a UDP-N-acetyl-alpha-D-glucosamine binding site. Residue Cys117 is the Proton donor of the active site. A 2-(S-cysteinyl)pyruvic acid O-phosphothioketal modification is found at Cys117. Residues 122–126, Asp305, and Ile327 contribute to the UDP-N-acetyl-alpha-D-glucosamine site; that span reads RPIDQ.

It belongs to the EPSP synthase family. MurA subfamily.

The protein resides in the cytoplasm. The enzyme catalyses phosphoenolpyruvate + UDP-N-acetyl-alpha-D-glucosamine = UDP-N-acetyl-3-O-(1-carboxyvinyl)-alpha-D-glucosamine + phosphate. It participates in cell wall biogenesis; peptidoglycan biosynthesis. Functionally, cell wall formation. Adds enolpyruvyl to UDP-N-acetylglucosamine. The polypeptide is UDP-N-acetylglucosamine 1-carboxyvinyltransferase 2 (Clostridium acetobutylicum (strain ATCC 824 / DSM 792 / JCM 1419 / IAM 19013 / LMG 5710 / NBRC 13948 / NRRL B-527 / VKM B-1787 / 2291 / W)).